The following is a 138-amino-acid chain: Ribulose bisphosphate carboxylase small subunit (138 aa).

It belongs to the RuBisCO small chain family. As to quaternary structure, heterohexadecamer of 8 large and 8 small subunits.

The protein localises to the plastid. Its subcellular location is the chloroplast. Its function is as follows. RuBisCO catalyzes two reactions: the carboxylation of D-ribulose 1,5-bisphosphate, the primary event in carbon dioxide fixation, as well as the oxidative fragmentation of the pentose substrate in the photorespiration process. Both reactions occur simultaneously and in competition at the same active site. Although the small subunit is not catalytic it is essential for maximal activity. The polypeptide is Ribulose bisphosphate carboxylase small subunit (Porphyra purpurea (Red seaweed)).